The chain runs to 623 residues: Glutathione import ATP-binding protein GsiA (623 aa).

ABC transporter domains follow at residues 15–269 and 325–564; these read VSGL…QTLL and LRSG…RKLM. Residues 49–56 and 357–364 contribute to the ATP site; these read GESGSGKS.

Belongs to the ABC transporter superfamily. Glutathione importer (TC 3.A.1.5.11) family. The complex is composed of two ATP-binding proteins (GsiA), two transmembrane proteins (GsiC and GsiD) and a solute-binding protein (GsiB).

Its subcellular location is the cell inner membrane. The catalysed reaction is glutathione(out) + ATP + H2O = glutathione(in) + ADP + phosphate + H(+). Functionally, part of the ABC transporter complex GsiABCD involved in glutathione import. Responsible for energy coupling to the transport system. This chain is Glutathione import ATP-binding protein GsiA, found in Salmonella choleraesuis (strain SC-B67).